Here is a 152-residue protein sequence, read N- to C-terminus: Transcriptional regulator MraZ (152 aa).

2 consecutive SpoVT-AbrB domains span residues 5–52 (ASAV…PLNQ) and 81–124 (ATEC…SESE).

This sequence belongs to the MraZ family. As to quaternary structure, forms oligomers.

It localises to the cytoplasm. The protein localises to the nucleoid. The chain is Transcriptional regulator MraZ from Histophilus somni (strain 2336) (Haemophilus somnus).